We begin with the raw amino-acid sequence, 102 residues long: Large ribosomal subunit protein bL21 (102 aa).

It belongs to the bacterial ribosomal protein bL21 family. In terms of assembly, part of the 50S ribosomal subunit. Contacts protein L20.

In terms of biological role, this protein binds to 23S rRNA in the presence of protein L20. This is Large ribosomal subunit protein bL21 from Ehrlichia ruminantium (strain Welgevonden).